Consider the following 212-residue polypeptide: MKQLFRQWYDLSEIKKELTTRNWFPATSGNISIKVSHEPLTFLITASGKDKTKTTPDDFLLVDHLGVPVLETELRPSAETILHTHIYNNTNAGCVLHVHTTDNNVITNLYSDAVTLQNQEIIKALDIWEEGATIHIPIIENHSHIPTLGENFRKHIQGDSGAVLIRNHGITVWGRDSFDAKKRLEAYEFLFQFHIKLLSIQGGVSNGANSYS.

Residues His97 and His99 each coordinate Zn(2+).

Belongs to the aldolase class II family. MtnB subfamily. Homotetramer. Requires Zn(2+) as cofactor.

The catalysed reaction is 5-(methylsulfanyl)-D-ribulose 1-phosphate = 5-methylsulfanyl-2,3-dioxopentyl phosphate + H2O. Its pathway is amino-acid biosynthesis; L-methionine biosynthesis via salvage pathway; L-methionine from S-methyl-5-thio-alpha-D-ribose 1-phosphate: step 2/6. Functionally, catalyzes the dehydration of methylthioribulose-1-phosphate (MTRu-1-P) into 2,3-diketo-5-methylthiopentyl-1-phosphate (DK-MTP-1-P). The chain is Methylthioribulose-1-phosphate dehydratase from Bacillus thuringiensis subsp. konkukian (strain 97-27).